A 148-amino-acid chain; its full sequence is Small ribosomal subunit protein uS12 (148 aa).

The protein belongs to the universal ribosomal protein uS12 family. Part of the 30S ribosomal subunit.

With S4 and S5 plays an important role in translational accuracy. Located at the interface of the 30S and 50S subunits. The chain is Small ribosomal subunit protein uS12 from Methanocaldococcus jannaschii (strain ATCC 43067 / DSM 2661 / JAL-1 / JCM 10045 / NBRC 100440) (Methanococcus jannaschii).